The following is a 249-amino-acid chain: Probable phosphatase Shal_1519 (249 aa).

Residues His8, His10, His16, His41, Glu74, His102, His132, Asp193, and His195 each contribute to the Zn(2+) site.

The protein belongs to the PHP family. Zn(2+) serves as cofactor.

The chain is Probable phosphatase Shal_1519 from Shewanella halifaxensis (strain HAW-EB4).